Consider the following 588-residue polypeptide: Probable basic-leucine zipper transcription factor M (588 aa).

The stretch at 127-157 (QVEQQQEQEQEQEQQQKQQQQQYIEKQIQEI) forms a coiled coil. The segment covering 221 to 240 (QQNHIDNQSLNNSNTKTSKN) has biased composition (low complexity). Positions 221 to 250 (QQNHIDNQSLNNSNTKTSKNQQKDNNLPKK) are disordered. Residues 263-326 (NNNNIEKKRD…GSNLMRPEPE (64 aa)) form the bZIP domain. Residues 269 to 289 (KKRDQTESSKNFREKKKEYVK) form a basic motif region. Residues 291 to 312 (IESKILALTLENDKLKKENDSL) are leucine-zipper.

It belongs to the bZIP family.

It is found in the nucleus. Probable transcriptional regulator. This chain is Probable basic-leucine zipper transcription factor M (bzpM), found in Dictyostelium discoideum (Social amoeba).